We begin with the raw amino-acid sequence, 271 residues long: Elongation factor Ts (271 aa).

The interval 76–79 is involved in Mg(2+) ion dislocation from EF-Tu; sequence TDFV.

Belongs to the EF-Ts family.

It is found in the cytoplasm. Associates with the EF-Tu.GDP complex and induces the exchange of GDP to GTP. It remains bound to the aminoacyl-tRNA.EF-Tu.GTP complex up to the GTP hydrolysis stage on the ribosome. The sequence is that of Elongation factor Ts from Mycolicibacterium gilvum (strain PYR-GCK) (Mycobacterium gilvum (strain PYR-GCK)).